The primary structure comprises 282 residues: Bis(5'-nucleosyl)-tetraphosphatase, symmetrical (282 aa).

The protein belongs to the Ap4A hydrolase family.

The catalysed reaction is P(1),P(4)-bis(5'-adenosyl) tetraphosphate + H2O = 2 ADP + 2 H(+). In terms of biological role, hydrolyzes diadenosine 5',5'''-P1,P4-tetraphosphate to yield ADP. This Shigella dysenteriae serotype 1 (strain Sd197) protein is Bis(5'-nucleosyl)-tetraphosphatase, symmetrical.